The primary structure comprises 304 residues: Carbonic anhydrase 5A, mitochondrial (304 aa).

Residues Met1–Phe34 constitute a mitochondrion transit peptide. The Alpha-carbonic anhydrase domain maps to Gln35–Phe295. Residues His129, His131, and His154 each contribute to the Zn(2+) site.

The protein belongs to the alpha-carbonic anhydrase family. The cofactor is Zn(2+). High in liver, also detected in heart, lung, kidney, spleen and intestine.

The protein localises to the mitochondrion. The enzyme catalyses hydrogencarbonate + H(+) = CO2 + H2O. Functionally, mitochondrial carbonic anhydrase that catalyzes the reversible conversion of carbon dioxide to bicarbonate/HCO3. Mitochondria are impermeable to HCO3, and thus this intramitochondrial carbonic anhydrase is pivotal in providing HCO3 for multiple mitochondrial enzymes that catalyze the formation of essential metabolites of intermediary metabolism in the urea and Krebs cycles. The polypeptide is Carbonic anhydrase 5A, mitochondrial (Rattus norvegicus (Rat)).